A 445-amino-acid chain; its full sequence is MALLGNFLCCLLVAWLCGPGLGVPLAPADRAPAVGQFWHVTDLHLDPTYHITDDRTKVCASSKGANASNPGPFGDVLCDSPYQLILSAFDFIKNSGQEASFMIWTGDSPPHVPVPELSTGTVIKVITNMTMTVQNLFPNLQVFPALGNHDYWPQDQLPIVTSKVYSAVADLWKPWLGEEAISTLKKGGFYSQKVASNPGLRIISLNTNLYYGPNIMTLNKTDPANQFEWLENTLNSSLWNKEKVYIIAHVPVGYLPYATDTPAIRQYYNEKLLDIFRRYSSVIAGQFYGHTHRDSLMVLSDKNGNPLNSVFVAPAVTPVKGVLQKETNNPGVRLFQYKPGDYTLLDMVQYYLNLTEANLKGESNWTLEYVLTQAYSVADLQPKSLYALVQQFATKDSKQFLKYYHYYFVSYDSSATCDQHCKTLQVCAIMNLDSMSYDDCLKQHL.

An N-terminal signal peptide occupies residues 1 to 22; the sequence is MALLGNFLCCLLVAWLCGPGLG. Residues Asp42 and His44 each coordinate Zn(2+). Cysteines 59 and 78 form a disulfide. N-linked (GlcNAc...) asparagine glycosylation occurs at Asn66. Asp107 contacts Zn(2+). His111 contacts ATP. Asn128 is a glycosylation site (N-linked (GlcNAc...) asparagine). Asn148 contacts Zn(2+). The ATP site is built by Asn148 and His149. N-linked (GlcNAc...) asparagine glycosylation is found at Asn219 and Asn235. His249 is a Zn(2+) binding site. An ATP-binding site is contributed by Tyr257. Positions 290 and 292 each coordinate Zn(2+). 2 N-linked (GlcNAc...) asparagine glycosylation sites follow: Asn353 and Asn364. Disulfide bonds link Cys417–Cys421 and Cys427–Cys440.

It belongs to the acid sphingomyelinase family. As to quaternary structure, monomer. Homodimer; homodimerizes following 2',3'-cGAMP-binding. Zn(2+) serves as cofactor. N-glycosylated. As to expression, detected in blood serum (at protein level).

The protein resides in the secreted. It carries out the reaction 2',3'-cGAMP + H2O = 5'-pGpA(2'-5') + H(+). The enzyme catalyses 5'-pGpA(2'-5') + H2O = 5'-GpA(2'-5') + phosphate. The catalysed reaction is a ribonucleoside 5'-triphosphate + H2O = a ribonucleoside 5'-diphosphate + phosphate + H(+). It catalyses the reaction ATP + H2O = ADP + phosphate + H(+). With respect to regulation, requires micromolar levels of Zn(2+) for activity. Inhibited by millimolar levels of Zn(2+). Cyclic-nucleotide phosphodiesterase that acts as a negative regulator of innate immunity by mediating degradation of 2',3'-cGAMP, thereby inhibiting the cGAS-STING signaling. Specifically linearizes 2',3'-cGAMP into 2'5'-bond pGpA and further hydrolyzes pGpA to produce GpA. Also has in vitro nucleotide phosphodiesterase activity with nucleoside triphosphates, such as ATP. Has in vitro activity with p-nitrophenyl-TMP. Has lower activity with nucleoside diphosphates, and no activity with nucleoside monophosphates. Has in vitro activity with CDP-choline, giving rise to CMP and phosphocholine. Has in vitro activity with CDP-ethanolamine. Does not have sphingomyelin phosphodiesterase activity. The chain is Cyclic GMP-AMP phosphodiesterase SMPDL3A from Mus musculus (Mouse).